The sequence spans 327 residues: E3 ubiquitin ligase RNF121 (327 aa).

At Ala2 the chain carries N-acetylalanine. The next 5 helical transmembrane spans lie at 50 to 70 (MHAE…LLLV), 79 to 99 (SYNM…TVKL), 100 to 120 (HWWR…FVTF), 148 to 168 (ATGI…NLLF), and 172 to 192 (PEDA…YGVL). Residues 226–276 (CAVCGQQIFVDVSEEGIIENTYRLSCNHVFHEFCIRGWCIVGKKQTCPYCK) form an RING-type; atypical zinc finger. Residues 306–326 (LVAWQPVIIGVVQGINYILGL) traverse the membrane as a helical segment.

Belongs to the RNF121 family.

The protein localises to the endoplasmic reticulum membrane. The catalysed reaction is S-ubiquitinyl-[E2 ubiquitin-conjugating enzyme]-L-cysteine + [acceptor protein]-L-lysine = [E2 ubiquitin-conjugating enzyme]-L-cysteine + N(6)-ubiquitinyl-[acceptor protein]-L-lysine.. It functions in the pathway protein modification; protein ubiquitination. In terms of biological role, E3 ubiquitin ligase which accepts ubiquitin and transfers it to substrates thereby promoting their degradation by the endoplasmic reticulum-associated degradation (ERAD) pathway which is a pathway involved in ubiquitin-dependent degradation of misfolded endoplasmic reticulum proteins. May regulate the unfolded protein response to reduce endoplasmic reticulum stress. This chain is E3 ubiquitin ligase RNF121 (RNF121), found in Homo sapiens (Human).